A 287-amino-acid chain; its full sequence is Eukaryotic translation initiation factor 3 subunit F (287 aa).

The 131-residue stretch at 12–142 (VRVHPVVLFQ…IKAYVCVSLG (131 aa)) folds into the MPN domain.

The protein belongs to the eIF-3 subunit F family. As to quaternary structure, component of the eukaryotic translation initiation factor 3 (eIF-3) complex.

It is found in the cytoplasm. In terms of biological role, component of the eukaryotic translation initiation factor 3 (eIF-3) complex, which is involved in protein synthesis of a specialized repertoire of mRNAs and, together with other initiation factors, stimulates binding of mRNA and methionyl-tRNAi to the 40S ribosome. The eIF-3 complex specifically targets and initiates translation of a subset of mRNAs involved in cell proliferation. In Culex quinquefasciatus (Southern house mosquito), this protein is Eukaryotic translation initiation factor 3 subunit F.